We begin with the raw amino-acid sequence, 573 residues long: DNA polymerase lambda (573 aa).

The BRCT domain maps to 35–131; it reads DARGWLSSLR…KLTDTDGFSL (97 aa). The disordered stretch occupies residues 126 to 235; the sequence is TDGFSLSSPK…GPDPAPEALG (110 aa). The segment covering 127–149 has biased composition (polar residues); that stretch reads DGFSLSSPKRSLNEPQPSKSGQD. The segment at 263–277 is DNA-binding; it reads KAYNVQGDKWRALGY. Catalysis depends on K310, which acts as the Schiff-base intermediate with DNA. Positions 343 to 346 are DNA-binding; sequence GTKT. DCTP contacts are provided by residues R384, 415–418, and 424–427; these read SFRR and GDVD. Residues 418-427 are involved in primer binding; sequence RGKVTCGDVD. Residues D425, D427, and D488 each contribute to the Mn(2+) site. A DNA-binding region spans residues 464-503; it reads ENGQQQKYLGVCRLPGAGQRHRRLDIIVVPYSEFACALLY. N511 is a binding site for dCTP.

Belongs to the DNA polymerase type-X family. Interacts with PCNA. Interacts with PAXX; promoting POLL recruitment to double-strand breaks (DSBs) and stimulation of the end-filling activity of POLL. Interacts with XRCC4; promoting POLL recruitment to double-strand breaks (DSBs) and stimulation of the end-filling activity of POLL. Interacts with NHEJ1/XLF; promoting POLL recruitment to double-strand breaks (DSBs) and stimulation of the end-filling activity of POLL. Mn(2+) is required as a cofactor.

The protein resides in the nucleus. It catalyses the reaction DNA(n) + a 2'-deoxyribonucleoside 5'-triphosphate = DNA(n+1) + diphosphate. Its function is as follows. DNA polymerase that functions in several pathways of DNA repair. Involved in base excision repair (BER) responsible for repair of lesions that give rise to abasic (AP) sites in DNA. Also contributes to DNA double-strand break repair by non-homologous end joining and homologous recombination. Has both template-dependent and template-independent (terminal transferase) DNA polymerase activities. Also has a 5'-deoxyribose-5-phosphate lyase (dRP lyase) activity. The sequence is that of DNA polymerase lambda from Rattus norvegicus (Rat).